We begin with the raw amino-acid sequence, 673 residues long: Hemocyanin subunit C (673 aa).

Residues 1-20 (MGAWKVWTFFAIALVVAVKA) form the signal peptide. Histidine 207, histidine 211, and histidine 237 together coordinate Cu cation. N-linked (GlcNAc...) asparagine glycosylation occurs at asparagine 323. Residues histidine 358, histidine 362, and histidine 398 each coordinate Cu cation. A disulfide bridge connects residues cysteine 568 and cysteine 616.

It belongs to the tyrosinase family. Hemocyanin subfamily. As to quaternary structure, 36-chain polymer consisting of 6 hexamers, each of which includes 4 different chains, A, B, C and D. In terms of tissue distribution, hemolymph.

It localises to the secreted. The protein resides in the extracellular space. In terms of biological role, hemocyanins are copper-containing oxygen carriers occurring freely dissolved in the hemolymph of many mollusks and arthropods. This Scutigera coleoptrata (House centipede) protein is Hemocyanin subunit C (HCC).